The chain runs to 83 residues: MKLSPKAAIEVCNEAAKKGLWILGIDGGHWLNPGFRIDSSASWTYDMPEEYKSKIPENNRLAIENIKDDIENGYTAFIITLKM.

Its function is as follows. This protein is able to protect a cell, which harbors the plasmid ColE5 encoding colicin E5, against colicin E5. The chain is Colicin-E5 immunity protein (imm) from Escherichia coli.